Here is a 608-residue protein sequence, read N- to C-terminus: Amino-acid acetyltransferase, mitochondrial (608 aa).

The region spanning 402–604 (LNLITEHEKG…DICTRIEPSL (203 aa)) is the N-acetyltransferase domain.

It belongs to the acetyltransferase family.

The protein resides in the mitochondrion. It carries out the reaction L-glutamate + acetyl-CoA = N-acetyl-L-glutamate + CoA + H(+). Its pathway is amino-acid biosynthesis; L-arginine biosynthesis; N(2)-acetyl-L-ornithine from L-glutamate: step 1/4. Functionally, N-acetylglutamate synthase involved in arginine biosynthesis. The polypeptide is Amino-acid acetyltransferase, mitochondrial (ARG2) (Yarrowia lipolytica (strain CLIB 122 / E 150) (Yeast)).